We begin with the raw amino-acid sequence, 101 residues long: Small ribosomal subunit protein uS14 (101 aa).

The protein belongs to the universal ribosomal protein uS14 family. Part of the 30S ribosomal subunit. Contacts proteins S3 and S10.

Binds 16S rRNA, required for the assembly of 30S particles and may also be responsible for determining the conformation of the 16S rRNA at the A site. In Saccharophagus degradans (strain 2-40 / ATCC 43961 / DSM 17024), this protein is Small ribosomal subunit protein uS14.